Reading from the N-terminus, the 501-residue chain is Lysine--tRNA ligase (501 aa).

The Mg(2+) site is built by Glu-406 and Glu-413.

It belongs to the class-II aminoacyl-tRNA synthetase family. Homodimer. Mg(2+) is required as a cofactor.

It localises to the cytoplasm. It carries out the reaction tRNA(Lys) + L-lysine + ATP = L-lysyl-tRNA(Lys) + AMP + diphosphate. This chain is Lysine--tRNA ligase (lysS), found in Halalkalibacterium halodurans (strain ATCC BAA-125 / DSM 18197 / FERM 7344 / JCM 9153 / C-125) (Bacillus halodurans).